The chain runs to 153 residues: FAD synthase (153 aa).

ATP is bound by residues 9 to 10 (TF), 14 to 17 (HPGH), Asn92, and Tyr119.

It belongs to the archaeal FAD synthase family. As to quaternary structure, homodimer. A divalent metal cation serves as cofactor.

The catalysed reaction is FMN + ATP + H(+) = FAD + diphosphate. It participates in cofactor biosynthesis; FAD biosynthesis; FAD from FMN: step 1/1. Catalyzes the transfer of the AMP portion of ATP to flavin mononucleotide (FMN) to produce flavin adenine dinucleotide (FAD) coenzyme. This chain is FAD synthase, found in Methanosphaerula palustris (strain ATCC BAA-1556 / DSM 19958 / E1-9c).